The primary structure comprises 385 residues: Chaperone protein DnaJ (385 aa).

In terms of domain architecture, J spans 5-70; sequence DYYEVLGVSK…ERKAAYDRYG (66 aa). The CR-type zinc finger occupies 143–221; sequence GLHKTINVPT…CNGHGRVEKD (79 aa). Zn(2+) contacts are provided by Cys-156, Cys-159, Cys-173, Cys-176, Cys-195, Cys-198, Cys-209, and Cys-212. 4 CXXCXGXG motif repeats span residues 156-163, 173-180, 195-202, and 209-216; these read CTSCEGTG, CPTCSGMG, CPTCSGLG, and CKTCNGHG.

This sequence belongs to the DnaJ family. Homodimer. It depends on Zn(2+) as a cofactor.

It is found in the cytoplasm. Participates actively in the response to hyperosmotic and heat shock by preventing the aggregation of stress-denatured proteins and by disaggregating proteins, also in an autonomous, DnaK-independent fashion. Unfolded proteins bind initially to DnaJ; upon interaction with the DnaJ-bound protein, DnaK hydrolyzes its bound ATP, resulting in the formation of a stable complex. GrpE releases ADP from DnaK; ATP binding to DnaK triggers the release of the substrate protein, thus completing the reaction cycle. Several rounds of ATP-dependent interactions between DnaJ, DnaK and GrpE are required for fully efficient folding. Also involved, together with DnaK and GrpE, in the DNA replication of plasmids through activation of initiation proteins. The chain is Chaperone protein DnaJ from Ruegeria sp. (strain TM1040) (Silicibacter sp.).